The following is a 486-amino-acid chain: MKMWSGRFREPLDPAFDHWQRSLQFDWQLLPEEVAASKAHALALEAAGVLTAGEREALHNALDLVTSRFHAPDGSGPSWVMSNQEAEDIHHFVELQLVATVGDLGLKLHTGRSRNEQIATDLRLFVRSRAQMLQAYLGTWAEILVARAQQMGNAAMPAYTHLQRAEPVLVAHWLLAYAEMLLRDASRLEDCVRRLNYCPLGSGAVAGATLALDRGIASQALNFAAPTANSMDATSDRDFVLEFLQALTGIALHASRFAEEITLYATAEFGFVDLPEAYSTGSSAMPQKKNPDLTELVRAKVGRINGAAQAVTLLLKGLPLAYNKDMQETQEPLFQATIATHQMLHLLAKFTHALQFRTDHMQAACESGFLNAMAAATYLVHKGIPFRKAHEIVGHAVRLGLDKGCELAGLSLDELRSLSPEFGADFYDAVTLESTLDCHDVLGGTARAQVQASLEAMQRRTGDLVNARGRIDLGLSTVAEVSHADS.

It belongs to the lyase 1 family. Argininosuccinate lyase subfamily.

It localises to the cytoplasm. The enzyme catalyses 2-(N(omega)-L-arginino)succinate = fumarate + L-arginine. It participates in amino-acid biosynthesis; L-arginine biosynthesis; L-arginine from L-ornithine and carbamoyl phosphate: step 3/3. The protein is Argininosuccinate lyase of Acidobacterium capsulatum (strain ATCC 51196 / DSM 11244 / BCRC 80197 / JCM 7670 / NBRC 15755 / NCIMB 13165 / 161).